A 236-amino-acid polypeptide reads, in one-letter code: uncharacterized protein (236 aa).

The region spanning 4–225 is the ABC transporter domain; sequence LLEASIEQAG…TGLEGQSLLD (222 aa). Residue 38–45 coordinates ATP; sequence GANGAGKS.

Belongs to the ABC transporter superfamily.

This is an uncharacterized protein from Bacillus subtilis (strain 168).